Reading from the N-terminus, the 52-residue chain is Metallothionein-2 (52 aa).

2 repeats span residues 43–47 and 48–52; these read QTCKC.

The protein belongs to the metallothionein superfamily. Type 10 family.

The metallothioneins are involved in the cellular sequestration of toxic metal ions. This Candida glabrata (strain ATCC 2001 / BCRC 20586 / JCM 3761 / NBRC 0622 / NRRL Y-65 / CBS 138) (Yeast) protein is Metallothionein-2 (MT-II).